The sequence spans 207 residues: Large ribosomal subunit protein uL4 (207 aa).

A disordered region spans residues 44 to 76; it reads KRRGTASAKTRSEVRGGGRKPWRQKGTGRARHG. The segment covering 60–76 has biased composition (basic residues); it reads GGRKPWRQKGTGRARHG.

The protein belongs to the universal ribosomal protein uL4 family. As to quaternary structure, part of the 50S ribosomal subunit.

One of the primary rRNA binding proteins, this protein initially binds near the 5'-end of the 23S rRNA. It is important during the early stages of 50S assembly. It makes multiple contacts with different domains of the 23S rRNA in the assembled 50S subunit and ribosome. Functionally, forms part of the polypeptide exit tunnel. In Natranaerobius thermophilus (strain ATCC BAA-1301 / DSM 18059 / JW/NM-WN-LF), this protein is Large ribosomal subunit protein uL4.